Reading from the N-terminus, the 331-residue chain is Beta-ketoacyl-[acyl-carrier-protein] synthase III (331 aa).

Active-site residues include cysteine 115 and histidine 255. Residues 256-260 (QANFR) are ACP-binding. Asparagine 285 is a catalytic residue.

This sequence belongs to the thiolase-like superfamily. FabH family. As to quaternary structure, homodimer.

The protein resides in the cytoplasm. It carries out the reaction malonyl-[ACP] + acetyl-CoA + H(+) = 3-oxobutanoyl-[ACP] + CO2 + CoA. The protein operates within lipid metabolism; fatty acid biosynthesis. Functionally, catalyzes the condensation reaction of fatty acid synthesis by the addition to an acyl acceptor of two carbons from malonyl-ACP. Catalyzes the first condensation reaction which initiates fatty acid synthesis and may therefore play a role in governing the total rate of fatty acid production. Possesses both acetoacetyl-ACP synthase and acetyl transacylase activities. Its substrate specificity determines the biosynthesis of branched-chain and/or straight-chain of fatty acids. The polypeptide is Beta-ketoacyl-[acyl-carrier-protein] synthase III (Helicobacter pylori (strain Shi470)).